Here is an 823-residue protein sequence, read N- to C-terminus: Protein phosphatase 1 regulatory subunit 29 (823 aa).

An N-terminal signal peptide occupies residues 1–22 (MLRLGLCAAALLCVCQPGAVRA). The Extracellular segment spans residues 23–397 (DCWLIEGDKG…APSTSTTTHY (375 aa)). Residue Asn-54 is glycosylated (N-linked (GlcNAc...) asparagine). 5 LRR repeats span residues 56-77 (TVHD…SLNR), 80-101 (NLTD…AFLG), 104-125 (SLQV…MLRG), 128-149 (RLQF…AFSE), and 152-173 (SLIS…TFAS). N-linked (GlcNAc...) asparagine glycans are attached at residues Asn-80, Asn-85, and Asn-117. The 63-residue stretch at 185 to 247 (NPFNCECDLF…ITVLQAKCRN (63 aa)) folds into the LRRCT domain. N-linked (GlcNAc...) asparagine glycans are attached at residues Asn-205 and Asn-247. Residues 249–294 (SMPARPVSHPTPYSTDAQREPDENSGFNPDEILSVEPPASSTTDAS) form a disordered region. The Fibronectin type-III domain maps to 292 to 379 (DASAGPAIKL…FNHTCLTFTT (88 aa)). Residues 398–418 (IMTILGCLFGMVIVLGAVYYC) form a helical membrane-spanning segment. Residues 419-823 (LRKRRMQEEK…WKGVSAQQKL (405 aa)) are Cytoplasmic-facing. The disordered stretch occupies residues 590–624 (ASSAATPGALERPSFLSPPYKESSHHPLQRQLSAD). A phosphoserine mark is found at Ser-622, Ser-671, and Ser-675.

In terms of assembly, interacts with PPP1CA.

The protein localises to the membrane. In terms of biological role, inhibits phosphatase activity of protein phosphatase 1 (PP1) complexes. The protein is Protein phosphatase 1 regulatory subunit 29 (Elfn2) of Mus musculus (Mouse).